A 446-amino-acid polypeptide reads, in one-letter code: tRNA-2-methylthio-N(6)-dimethylallyladenosine synthase (446 aa).

Positions 2 to 122 (KKAYVKSYGC…LPDLLRQSRE (121 aa)) constitute an MTTase N-terminal domain. 6 residues coordinate [4Fe-4S] cluster: cysteine 11, cysteine 47, cysteine 85, cysteine 157, cysteine 161, and cysteine 164. Residues 143–375 (RNRGVTGFLT…QDLLDRQRHA (233 aa)) enclose the Radical SAM core domain. The TRAM domain maps to 378–440 (AASVGTLTEI…SNSLFGETLE (63 aa)).

It belongs to the methylthiotransferase family. MiaB subfamily. In terms of assembly, monomer. [4Fe-4S] cluster serves as cofactor.

The protein resides in the cytoplasm. The enzyme catalyses N(6)-dimethylallyladenosine(37) in tRNA + (sulfur carrier)-SH + AH2 + 2 S-adenosyl-L-methionine = 2-methylsulfanyl-N(6)-dimethylallyladenosine(37) in tRNA + (sulfur carrier)-H + 5'-deoxyadenosine + L-methionine + A + S-adenosyl-L-homocysteine + 2 H(+). Its function is as follows. Catalyzes the methylthiolation of N6-(dimethylallyl)adenosine (i(6)A), leading to the formation of 2-methylthio-N6-(dimethylallyl)adenosine (ms(2)i(6)A) at position 37 in tRNAs that read codons beginning with uridine. In Methylorubrum extorquens (strain PA1) (Methylobacterium extorquens), this protein is tRNA-2-methylthio-N(6)-dimethylallyladenosine synthase.